A 401-amino-acid polypeptide reads, in one-letter code: Dual-specificity RNA methyltransferase RlmN (401 aa).

Glu-114 (proton acceptor) is an active-site residue. Residues 120–365 (DKTRGTLCVS…TMVRRTRGDD (246 aa)) enclose the Radical SAM core domain. A disulfide bridge connects residues Cys-127 and Cys-370. [4Fe-4S] cluster contacts are provided by Cys-134, Cys-138, and Cys-141. Residues 187 to 188 (GE), Ser-219, 241 to 243 (SLH), and Asn-327 contribute to the S-adenosyl-L-methionine site. Cys-370 serves as the catalytic S-methylcysteine intermediate.

This sequence belongs to the radical SAM superfamily. RlmN family. The cofactor is [4Fe-4S] cluster.

Its subcellular location is the cytoplasm. It carries out the reaction adenosine(2503) in 23S rRNA + 2 reduced [2Fe-2S]-[ferredoxin] + 2 S-adenosyl-L-methionine = 2-methyladenosine(2503) in 23S rRNA + 5'-deoxyadenosine + L-methionine + 2 oxidized [2Fe-2S]-[ferredoxin] + S-adenosyl-L-homocysteine. The enzyme catalyses adenosine(37) in tRNA + 2 reduced [2Fe-2S]-[ferredoxin] + 2 S-adenosyl-L-methionine = 2-methyladenosine(37) in tRNA + 5'-deoxyadenosine + L-methionine + 2 oxidized [2Fe-2S]-[ferredoxin] + S-adenosyl-L-homocysteine. Functionally, specifically methylates position 2 of adenine 2503 in 23S rRNA and position 2 of adenine 37 in tRNAs. m2A2503 modification seems to play a crucial role in the proofreading step occurring at the peptidyl transferase center and thus would serve to optimize ribosomal fidelity. The sequence is that of Dual-specificity RNA methyltransferase RlmN from Stenotrophomonas maltophilia (strain R551-3).